A 72-amino-acid polypeptide reads, in one-letter code: Sperm protein associated with the nucleus on the X chromosome N1 (72 aa).

Residues 1–40 form a disordered region; the sequence is MEKPTSSTNGEKRKSPCDSNSKNDEMQETPNRDLVLEPSL. The segment covering 10–35 has biased composition (basic and acidic residues); sequence GEKRKSPCDSNSKNDEMQETPNRDLV.

This sequence belongs to the SPAN-X family.

The chain is Sperm protein associated with the nucleus on the X chromosome N1 (SPANXN1) from Pan troglodytes (Chimpanzee).